A 396-amino-acid chain; its full sequence is Apolipoprotein A-IV (396 aa).

Positions 1-20 are cleaved as a signal peptide; that stretch reads MFLKAVVLTLALVAVAGARA. 13 repeat units span residues 33–54, 60–81, 82–103, 115–136, 137–158, 159–180, 181–202, 203–224, 225–246, 247–268, 269–286, 287–308, and 309–330. The 13 X 22 AA approximate tandem repeats stretch occupies residues 33–330; that stretch reads DYFSQLSNNA…QMEQLRQKLG (298 aa). The disordered stretch occupies residues 361 to 396; it reads KESQDKTLSLPELEQQQEQQQEQQQEQVQMLAPLES. Positions 374–389 are enriched in low complexity; that stretch reads EQQQEQQQEQQQEQVQ.

This sequence belongs to the apolipoprotein A1/A4/E family. In terms of assembly, homodimer. In terms of processing, phosphorylation sites are present in the extracellular medium. As to expression, synthesized primarily in the intestine and secreted in plasma.

It is found in the secreted. May have a role in chylomicrons and VLDL secretion and catabolism. Required for efficient activation of lipoprotein lipase by ApoC-II; potent activator of LCAT. Apoa-IV is a major component of HDL and chylomicrons. The chain is Apolipoprotein A-IV from Homo sapiens (Human).